Reading from the N-terminus, the 429-residue chain is Histidine--tRNA ligase (429 aa).

The protein belongs to the class-II aminoacyl-tRNA synthetase family. In terms of assembly, homodimer.

It is found in the cytoplasm. It carries out the reaction tRNA(His) + L-histidine + ATP = L-histidyl-tRNA(His) + AMP + diphosphate + H(+). In Rippkaea orientalis (strain PCC 8801 / RF-1) (Cyanothece sp. (strain PCC 8801)), this protein is Histidine--tRNA ligase.